A 339-amino-acid chain; its full sequence is Protein H339R (339 aa).

Belongs to the asfivirus H339R family. In terms of assembly, interacts with host NACA (alpha chain of nascent polypeptide-associated complex).

It is found in the host cytoplasm. The protein resides in the host nucleus. This African swine fever virus (isolate Tick/Malawi/Lil 20-1/1983) (ASFV) protein is Protein H339R.